The chain runs to 252 residues: 5-oxoprolinase subunit A 1 (252 aa).

This sequence belongs to the LamB/PxpA family. In terms of assembly, forms a complex composed of PxpA, PxpB and PxpC.

The catalysed reaction is 5-oxo-L-proline + ATP + 2 H2O = L-glutamate + ADP + phosphate + H(+). Catalyzes the cleavage of 5-oxoproline to form L-glutamate coupled to the hydrolysis of ATP to ADP and inorganic phosphate. This chain is 5-oxoprolinase subunit A 1, found in Bordetella bronchiseptica (strain ATCC BAA-588 / NCTC 13252 / RB50) (Alcaligenes bronchisepticus).